The following is a 360-amino-acid chain: Zinc metalloproteinase nas-5 (360 aa).

Positions 1 to 21 (MDIKQLLLSIILTVSVVNGRG) are cleaved as a signal peptide. One can recognise a Peptidase M12A domain in the interval 61–269 (NALLSNSPLR…KKVCAIYHCS (209 aa)). N-linked (GlcNAc...) asparagine glycosylation occurs at N108. Intrachain disulfides connect C111-C268 and C134-C157. H165 contacts Zn(2+). The active site involves E166. H169 and H175 together coordinate Zn(2+). The PLAC domain maps to 299 to 336 (QGDSCTDRLGICPMLKSREMLNCKVMATFCCSSCSAPT).

Zn(2+) serves as cofactor.

Its subcellular location is the secreted. Its function is as follows. Metalloprotease. The polypeptide is Zinc metalloproteinase nas-5 (nas-5) (Caenorhabditis elegans).